Reading from the N-terminus, the 218-residue chain is Ras-related protein R-Ras (218 aa).

Residues 1 to 30 (MSSGAASGTGRGRPRGGGPGPRDPPPGETH) form a disordered region. Residues 7 to 20 (SGTGRGRPRGGGPG) are compositionally biased toward gly residues. 36–44 (GGGGVGKSA) serves as a coordination point for GTP. The Effector region motif lies at 58–66 (YDPTIEDSY). GTP contacts are provided by residues 83 to 87 (DTAGQ), 142 to 145 (NKAD), and 172 to 174 (SAK). Cys-215 is modified (cysteine methyl ester). Cys-215 carries S-geranylgeranyl cysteine lipidation. The propeptide at 216–218 (VLL) is removed in mature form.

This sequence belongs to the small GTPase superfamily. Ras family. Interacts with PLCE1. Interacts (active GTP-bound form preferentially) with RGS14. Interacts with OSBPL3. Interacts with ZDHHC19. Post-translationally, S-palmitoylated by ZDHHC19, leading to increased association with membranes and with rafts/caveolae as well as enhanced cell viability.

Its subcellular location is the cell membrane. It carries out the reaction GTP + H2O = GDP + phosphate + H(+). Its function is as follows. GTP-binding protein with GTPase activity, likely involved in the regulation of MAPK signaling pathway and thereby controlling multiple cellular processes. Regulates the organization of the actin cytoskeleton. With OSPBL3, modulates integrin beta-1 (ITGB1) activity. In Mus musculus (Mouse), this protein is Ras-related protein R-Ras (Rras).